Consider the following 317-residue polypeptide: Transaldolase (317 aa).

Catalysis depends on K126, which acts as the Schiff-base intermediate with substrate.

This sequence belongs to the transaldolase family. Type 1 subfamily. As to quaternary structure, homodimer.

Its subcellular location is the cytoplasm. It carries out the reaction D-sedoheptulose 7-phosphate + D-glyceraldehyde 3-phosphate = D-erythrose 4-phosphate + beta-D-fructose 6-phosphate. It functions in the pathway carbohydrate degradation; pentose phosphate pathway; D-glyceraldehyde 3-phosphate and beta-D-fructose 6-phosphate from D-ribose 5-phosphate and D-xylulose 5-phosphate (non-oxidative stage): step 2/3. In terms of biological role, transaldolase is important for the balance of metabolites in the pentose-phosphate pathway. The chain is Transaldolase from Burkholderia pseudomallei (strain 1710b).